A 291-amino-acid polypeptide reads, in one-letter code: Bifunctional protein FolD (291 aa).

NADP(+) contacts are provided by residues 173–175 and serine 198; that span reads GRS.

This sequence belongs to the tetrahydrofolate dehydrogenase/cyclohydrolase family. Homodimer.

The enzyme catalyses (6R)-5,10-methylene-5,6,7,8-tetrahydrofolate + NADP(+) = (6R)-5,10-methenyltetrahydrofolate + NADPH. It catalyses the reaction (6R)-5,10-methenyltetrahydrofolate + H2O = (6R)-10-formyltetrahydrofolate + H(+). It functions in the pathway one-carbon metabolism; tetrahydrofolate interconversion. Functionally, catalyzes the oxidation of 5,10-methylenetetrahydrofolate to 5,10-methenyltetrahydrofolate and then the hydrolysis of 5,10-methenyltetrahydrofolate to 10-formyltetrahydrofolate. In Psychrobacter sp. (strain PRwf-1), this protein is Bifunctional protein FolD.